A 296-amino-acid chain; its full sequence is Cytidine deaminase (296 aa).

2 CMP/dCMP-type deaminase domains span residues 47-167 (TEAE…FGPK) and 186-296 (DSSD…VDPV). Residue 88-90 (NLE) participates in substrate binding. His-101 contributes to the Zn(2+) binding site. The active-site Proton donor is Glu-103. The Zn(2+) site is built by Cys-128 and Cys-131.

This sequence belongs to the cytidine and deoxycytidylate deaminase family. As to quaternary structure, homodimer. Zn(2+) is required as a cofactor.

The enzyme catalyses cytidine + H2O + H(+) = uridine + NH4(+). It carries out the reaction 2'-deoxycytidine + H2O + H(+) = 2'-deoxyuridine + NH4(+). Functionally, this enzyme scavenges exogenous and endogenous cytidine and 2'-deoxycytidine for UMP synthesis. This Shewanella sp. (strain MR-7) protein is Cytidine deaminase.